A 339-amino-acid chain; its full sequence is Delta(9)-fatty-acid desaturase fat-6 (339 aa).

Helical transmembrane passes span Val52–Glu72, Thr77–His97, Tyr195–Trp215, and Ala219–Ile241.

It belongs to the fatty acid desaturase type 1 family. In terms of tissue distribution, expressed in the intestine in adult worms and in all four larval stages. Additional expression in the hypodermis in all life stages.

It localises to the membrane. The catalysed reaction is octadecanoyl-CoA + 2 Fe(II)-[cytochrome b5] + O2 + 2 H(+) = (9Z)-octadecenoyl-CoA + 2 Fe(III)-[cytochrome b5] + 2 H2O. The enzyme catalyses hexadecanoyl-CoA + 2 Fe(II)-[cytochrome b5] + O2 + 2 H(+) = (9Z)-hexadecenoyl-CoA + 2 Fe(III)-[cytochrome b5] + 2 H2O. It carries out the reaction heptadecanoyl-CoA + 2 Fe(II)-[cytochrome b5] + O2 + 2 H(+) = (9Z)-heptadecenoyl-CoA + 2 Fe(III)-[cytochrome b5] + 2 H2O. It catalyses the reaction (11E)-octadecenoyl-CoA + 2 Fe(II)-[cytochrome b5] + O2 + 2 H(+) = (9Z,11E)-octadecadienoyl-CoA + 2 Fe(III)-[cytochrome b5] + 2 H2O. It participates in lipid metabolism; monounsaturated fatty acid biosynthesis. Its pathway is lipid metabolism; fatty acid metabolism. Delta(9)-fatty acid desaturase that acts preferentially on stearoyl-CoA (octadecanoyl-CoA) producing the monounsaturated oleoyl-CoA ((9Z)-octadecenoyl-CoA), one of the most abundant monounsaturated fatty acid in Caenorhabditis elegans phospholipids and triacylglycerols. Also acts on palmitoyl-CoA (hexadecanoyl-CoA), heptadecanoyl-CoA and (11E)-octadecenoyl-CoA (trans-vaccenoyl-CoA), the monounsaturated fatty acids (MUFAs) produced are further used as substrates to synthesize polyunsaturated fatty acids (PUFAs) by several other desaturases and elongases. Unlike plants, Caenorhabditis elegans desaturases seem to use fatty acyl-CoAs as substrates. The polypeptide is Delta(9)-fatty-acid desaturase fat-6 (fat-6) (Caenorhabditis elegans).